We begin with the raw amino-acid sequence, 98 residues long: NADH-ubiquinone oxidoreductase chain 4L (98 aa).

3 helical membrane passes run Met-1–Ile-21, Ser-28–Ile-48, and Ala-59–Val-79.

Belongs to the complex I subunit 4L family. Core subunit of respiratory chain NADH dehydrogenase (Complex I) which is composed of 45 different subunits.

The protein localises to the mitochondrion inner membrane. It catalyses the reaction a ubiquinone + NADH + 5 H(+)(in) = a ubiquinol + NAD(+) + 4 H(+)(out). Core subunit of the mitochondrial membrane respiratory chain NADH dehydrogenase (Complex I) which catalyzes electron transfer from NADH through the respiratory chain, using ubiquinone as an electron acceptor. Part of the enzyme membrane arm which is embedded in the lipid bilayer and involved in proton translocation. In Lagorchestes hirsutus (Rufous hare-wallaby), this protein is NADH-ubiquinone oxidoreductase chain 4L (MT-ND4L).